We begin with the raw amino-acid sequence, 232 residues long: 7-cyano-7-deazaguanine synthase (232 aa).

Position 8-18 (8-18) interacts with ATP; that stretch reads LSGGLDSATVL. Positions 188, 198, 201, and 204 each coordinate Zn(2+).

It belongs to the QueC family. It depends on Zn(2+) as a cofactor.

The catalysed reaction is 7-carboxy-7-deazaguanine + NH4(+) + ATP = 7-cyano-7-deazaguanine + ADP + phosphate + H2O + H(+). It participates in purine metabolism; 7-cyano-7-deazaguanine biosynthesis. Functionally, catalyzes the ATP-dependent conversion of 7-carboxy-7-deazaguanine (CDG) to 7-cyano-7-deazaguanine (preQ(0)). The protein is 7-cyano-7-deazaguanine synthase of Nitrosospira multiformis (strain ATCC 25196 / NCIMB 11849 / C 71).